The sequence spans 21 residues: Agglutinin beta-1 chain (21 aa).

Polar residues predominate over residues 1-10 (NGPNGKSQSI). Positions 1–21 (NGPNGKSQSIIVGPWGDRVTN) are disordered.

This sequence belongs to the jacalin lectin family. In terms of assembly, formed of four alpha chains and four beta chains.

In terms of biological role, D-galactose-specific lectin, binds the T-antigen structure Gal-beta1,3-GalNAc. The chain is Agglutinin beta-1 chain from Maclura pomifera (Osage orange).